Consider the following 227-residue polypeptide: A-type potassium channel modulatory protein KCNIP1 (227 aa).

One can recognise an EF-hand 1; degenerate domain in the interval 38–94 (LEMTMVCHRPEGLEQLEAQTNFTKRELQVLYRGFKNECPSGVVNEETFKQIYAQFFP). EF-hand domains lie at 97–132 (DAST…LLRG), 133–168 (TVHE…IYDM), and 181–216 (TPRQ…DDNI). 9 residues coordinate Ca(2+): D146, N148, D150, Y152, E157, D194, N196, D198, and E205. Residues 214-227 (DNIMRSLQLFQNVM) form an interaction with KCND2 region.

It belongs to the recoverin family. As to quaternary structure, component of heteromultimeric potassium channels. Identified in potassium channel complexes containing KCND1, KCND2, KCND3, KCNIP1, KCNIP2, KCNIP3, KCNIP4, DPP6 and DPP10. Part of a heterooctamer composed of the tetrameric channel and four KCNIP1 chains. Probably part of a complex consisting of KCNIP1, KCNIP2 isoform 3 and KCND2. Self-associates to form homodimers and homotetramers. Interacts with KCNIP2 isoform 3 in a calcium-dependent manner. Interacts with KCND2; this interaction mediates the capture of both the N- and C-terminus of KCND2, thus preventing KCND2 N-type inactivation and modulates the channel gating kinetics. Interacts with KCND3; each KCNIP1 monomer interacts with two adjacent KCND3 subunits, through both the N-terminal inactivation ball of a KCND3 subunit and a C-terminal helix from the adjacent KCND3 subunit, clamping them together; this interaction stabilizes the tetrameric form and modulates the channel gating kinetics namely channel activation and inactivation kinetics and rate of recovery from inactivation. In terms of tissue distribution, expressed in brain. Found in a subpopulation of neurons widely distributed and enriched in Purkinje cells of the cerebellum and in the reticular thalamic and medial habenular nuclei.

The protein resides in the cell membrane. The protein localises to the cytoplasm. It is found in the cell projection. Its subcellular location is the dendrite. In terms of biological role, regulatory subunit of Kv4/D (Shal)-type voltage-gated rapidly inactivating A-type potassium channels. Regulates channel density, inactivation kinetics and rate of recovery from inactivation in a calcium-dependent and isoform-specific manner. Modulates KCND2/Kv4.2 currents. In vitro, modulates KCND1/Kv4.1 currents. Increases the presence of KCND2 at the cell surface. The polypeptide is A-type potassium channel modulatory protein KCNIP1 (Mus musculus (Mouse)).